Consider the following 394-residue polypeptide: Elongation factor Tu (394 aa).

The tr-type G domain occupies 10 to 204; sequence KEHANIGTIG…AVDDYIPTPE (195 aa). The tract at residues 19–26 is G1; that stretch reads GHVDHGKT. 19–26 contacts GTP; it reads GHVDHGKT. Position 26 (Thr26) interacts with Mg(2+). A G2 region spans residues 60-64; it reads GITIN. Positions 81–84 are G3; the sequence is DCPG. Residues 81-85 and 136-139 contribute to the GTP site; these read DCPGH and NKVD. Residues 136–139 form a G4 region; sequence NKVD. Residues 174–176 form a G5 region; that stretch reads SAL.

This sequence belongs to the TRAFAC class translation factor GTPase superfamily. Classic translation factor GTPase family. EF-Tu/EF-1A subfamily. Monomer.

It localises to the cytoplasm. It catalyses the reaction GTP + H2O = GDP + phosphate + H(+). Its function is as follows. GTP hydrolase that promotes the GTP-dependent binding of aminoacyl-tRNA to the A-site of ribosomes during protein biosynthesis. In Staphylococcus haemolyticus (strain JCSC1435), this protein is Elongation factor Tu.